We begin with the raw amino-acid sequence, 211 residues long: Ubiquitin-conjugating enzyme E2 S (211 aa).

Residues 11 to 157 enclose the UBC core domain; sequence HVIRQVYKEV…ARLMTEIHAH (147 aa). The Glycyl thioester intermediate role is filled by C95. Residues 157–167 show a composition bias toward basic and acidic residues; it reads HSSSLRGKDPT. Residues 157–211 form a disordered region; the sequence is HSSSLRGKDPTDPCSSASVTGALGDGPMAKKHAGDRDKKLAAKKKTDKKRALRRL. Residues 197–211 show a composition bias toward basic residues; sequence AAKKKTDKKRALRRL.

The protein belongs to the ubiquitin-conjugating enzyme family.

It carries out the reaction S-ubiquitinyl-[E1 ubiquitin-activating enzyme]-L-cysteine + [E2 ubiquitin-conjugating enzyme]-L-cysteine = [E1 ubiquitin-activating enzyme]-L-cysteine + S-ubiquitinyl-[E2 ubiquitin-conjugating enzyme]-L-cysteine.. Its pathway is protein modification; protein ubiquitination. In terms of biological role, catalyzes the covalent attachment of ubiquitin to other proteins. Acts as an essential factor of the anaphase promoting complex/cyclosome (APC/C), a cell cycle-regulated ubiquitin ligase that controls progression through mitosis. Acts by specifically elongating 'Lys-11'-linked polyubiquitin chains initiated by the E2 enzyme ube2c/ubch10 on APC/C substrates, enhancing the degradation of APC/C substrates by the proteasome and promoting mitotic exit. This chain is Ubiquitin-conjugating enzyme E2 S (ube2s), found in Aquarana catesbeiana (American bullfrog).